The sequence spans 253 residues: Zinc import ATP-binding protein ZnuC (253 aa).

In terms of domain architecture, ABC transporter spans 6 to 227 (VTLNKISVTF…FGNRGAEQLA (222 aa)). ATP is bound at residue 38–45 (GPNGAGKS).

The protein belongs to the ABC transporter superfamily. Zinc importer (TC 3.A.1.15.5) family. The complex is composed of two ATP-binding proteins (ZnuC), two transmembrane proteins (ZnuB) and a solute-binding protein (ZnuA).

The protein localises to the cell inner membrane. The catalysed reaction is Zn(2+)(out) + ATP(in) + H2O(in) = Zn(2+)(in) + ADP(in) + phosphate(in) + H(+)(in). In terms of biological role, part of the ABC transporter complex ZnuABC involved in zinc import. Responsible for energy coupling to the transport system. The polypeptide is Zinc import ATP-binding protein ZnuC (Yersinia pestis bv. Antiqua (strain Antiqua)).